The sequence spans 550 residues: Arginine--tRNA ligase (550 aa).

Residues 130-140 (ANPTGPIHLGG) carry the 'HIGH' region motif.

This sequence belongs to the class-I aminoacyl-tRNA synthetase family. In terms of assembly, monomer.

The protein resides in the cytoplasm. It carries out the reaction tRNA(Arg) + L-arginine + ATP = L-arginyl-tRNA(Arg) + AMP + diphosphate. This Corynebacterium glutamicum (strain R) protein is Arginine--tRNA ligase.